Reading from the N-terminus, the 341-residue chain is GDT1-like protein 1, chloroplastic (341 aa).

Low complexity predominate over residues 1-13 (MASVASSTVFASS). 2 disordered regions span residues 1–41 (MASV…GRSV) and 54–76 (VVTRASDEEGPPEPAGQGRGGGR). The N-terminal 57 residues, 1 to 57 (MASVASSTVFASSLPHHRATTRAPPTPPRIPRRARLPGRSVVSCLPKRGSEKLVVTR), are a transit peptide targeting the chloroplast. The next 7 helical transmembrane spans lie at 79 to 99 (PSLDASSCGLALAAAAGVLML), 117 to 137 (VVGDLGDISTGFASAFLLIFF), 158 to 178 (AIIFLGTFGALAVMTIISVVL), 203 to 223 (FLAACLLVYYGVTTLLDAASG), 246 to 266 (GAGIISAASTIASTFVLVFIA), 286 to 306 (LGVIAGSLAGHAVATLIAVLG), and 318 to 338 (IVAYIGGSLFLAFAAVTLVEI).

It belongs to the GDT1 family.

Its subcellular location is the plastid. It localises to the chloroplast membrane. This chain is GDT1-like protein 1, chloroplastic, found in Oryza sativa subsp. indica (Rice).